Consider the following 287-residue polypeptide: MQVQKSFKDKKTSGTLYLVPTPIGNLQDMTFRAVATLKEVDFICAEDTRNTGLLLKHFDIATKQISFHEHNAYEKIPDLIDLLISGRSLAQVSDAGMPSISDPGHDLVKAAIDSDIAVVALPGASAGITALIASGLAPQPHVFYGFLSRKAGQQKAFFEDKHHYPETQMFYESPYRIKDTLTNMLACYGDRQVVLVRELTKLFEEYQRGSISEILSYLEETSLKGECLLIVAGAQVDSEVELTADVDLVSLVQKEIQAGAKPNQAIKTIAKAYQVNRQELYQQFHDL.

Belongs to the methyltransferase superfamily. RsmI family.

The protein resides in the cytoplasm. The enzyme catalyses cytidine(1402) in 16S rRNA + S-adenosyl-L-methionine = 2'-O-methylcytidine(1402) in 16S rRNA + S-adenosyl-L-homocysteine + H(+). In terms of biological role, catalyzes the 2'-O-methylation of the ribose of cytidine 1402 (C1402) in 16S rRNA. The chain is Ribosomal RNA small subunit methyltransferase I from Streptococcus pyogenes serotype M18 (strain MGAS8232).